Here is an 83-residue protein sequence, read N- to C-terminus: Mu-theraphotoxin-Hhn2j 4 (83 aa).

The N-terminal stretch at 1-21 is a signal peptide; it reads MKASMFLALAGSVLLFVVGYA. Residues 22 to 48 constitute a propeptide that is removed on maturation; sequence SESEEKEFPIELLSKIFAVDVFKGEER. 3 cysteine pairs are disulfide-bonded: Cys50–Cys65, Cys57–Cys70, and Cys64–Cys77. The residue at position 81 (Leu81) is a Leucine amide.

This sequence belongs to the neurotoxin 10 (Hwtx-1) family. 15 (Hntx-3) subfamily. As to quaternary structure, monomer. Expressed by the venom gland.

The protein resides in the secreted. In terms of biological role, lethal neurotoxin. Selectively blocks tetrodotoxin-sensitive voltage-gated sodium channels (Nav). Does not affect tetrodotoxin-resistant voltage-gated sodium channels or calcium channels. This is Mu-theraphotoxin-Hhn2j 4 from Cyriopagopus hainanus (Chinese bird spider).